We begin with the raw amino-acid sequence, 343 residues long: Mas-related G-protein coupled receptor member F (343 aa).

Over 1-44 (MAGNCSWEAHSTNQNKMCPGMSEALELYSRGFLTIEQIATLPPP) the chain is Extracellular. The N-linked (GlcNAc...) asparagine glycan is linked to N4. The chain crosses the membrane as a helical span at residues 45–66 (AVTNYIFLLLCLCGLVGNGLVL). At 67–82 (WFFGFSIKRTPFSIYF) the chain is on the cytoplasmic side. The helical transmembrane segment at 83–104 (LHLASADGIYLFSKAVIALLNM) threads the bilayer. The Extracellular portion of the chain corresponds to 105 to 123 (GTFLGSFPDYVRRVSRIVG). Residues 124–144 (LCTFFAGVSLLPAISIERCVS) form a helical membrane-spanning segment. Topologically, residues 145 to 160 (VIFPMWYWRRRPKRLS) are cytoplasmic. The chain crosses the membrane as a helical span at residues 161–181 (AGVCALLWLLSFLVTSIHNYF). At 182-198 (CMFLGHEASGTACLNMD) the chain is on the extracellular side. Residues 199–220 (ISLGILLFFLFCPLMVLPCLAL) traverse the membrane as a helical segment. Over 221–241 (ILHVECRARRRQRSAKLNHVV) the chain is Cytoplasmic. Residues 242 to 263 (LAIVSVFLVSSIYLGIDWFLFW) traverse the membrane as a helical segment. The Extracellular segment spans residues 264 to 273 (VFQIPAPFPE). Residues 274–294 (YVTDLCICINSSAKPIVYFLA) traverse the membrane as a helical segment. At 295–343 (GRDKSQRLWEPLRVVFQRALRDGAEPGDAASSTPNTVTMEMQCPSGNAS) the chain is on the cytoplasmic side. Residues 318-343 (AEPGDAASSTPNTVTMEMQCPSGNAS) form a disordered region. Polar residues predominate over residues 324 to 343 (ASSTPNTVTMEMQCPSGNAS).

Belongs to the G-protein coupled receptor 1 family. Mas subfamily. In terms of tissue distribution, gut, vas deferens, uterus and aorta; barely detectable in liver, kidney, lung, and salivary gland. In the brain, markedly abundant in the cerebellum.

It is found in the cell membrane. Functionally, orphan receptor. May bind to a neuropeptide and may regulate nociceptor function and/or development, including the sensation or modulation of pain. This Rattus norvegicus (Rat) protein is Mas-related G-protein coupled receptor member F (Mrgprf).